The primary structure comprises 140 residues: Ubiquitin-like protein ATG12 (140 aa).

The tract at residues 1 to 52 (MAEEPQTVLQLPPSSAAGGEGLTDVSPETTTPEPPSSAAVSPGTEEPAGDTK) is disordered. A compositionally biased stretch (low complexity) spans 25–42 (VSPETTTPEPPSSAAVSP). Gly140 is covalently cross-linked (Glycyl lysine isopeptide (Gly-Lys) (interchain with K-? in acceptor protein)).

The protein belongs to the ATG12 family. In terms of assembly, forms a conjugate with ATG5. Part of the minor complex composed of 4 sets of ATG12-ATG5 and ATG16L1 (400 kDa); this complex interacts with ATG3 leading to disruption of ATG7 interaction and promotion of ATG8-like proteins lipidation. Forms an 800-kDa complex composed of ATG12-ATG5 and ATG16L2. Interacts with DHX58/RIG-1, IFIH1/MDA5 and MAVS/IPS-1 in monomeric form as well as in ATG12-ATG5 conjugate. The interaction with MAVS is further enhanced upon vesicular stomatitis virus (VSV) infection. Interacts with ATG3; this interaction is essential for phosphatidylethanolamine (PE)-conjugated ATG8-like proteins formation. Interacts with ATG7. Interacts with ATG10. Interacts with TECPR1. Interacts with SH3BGRL. The ATG12-ATG5 conjugate interacts with PDCD6IP (via the BRO1 domain); this interaction is bridged by ATG12 and promotes multiple PDCD6IP-mediated functions such as endolysosomal trafficking, macroautophagy and exosome biogenesis. In terms of processing, acetylated by EP300.

It localises to the cytoplasm. Its subcellular location is the preautophagosomal structure membrane. In terms of biological role, ubiquitin-like protein involved in autophagy vesicles formation. Conjugation with ATG5 through a ubiquitin-like conjugating system involving also ATG7 as an E1-like activating enzyme and ATG10 as an E2-like conjugating enzyme, is essential for its function. The ATG12-ATG5 conjugate acts as an E3-like enzyme which is required for lipidation of ATG8 family proteins and their association to the vesicle membranes. The ATG12-ATG5 conjugate also negatively regulates the innate antiviral immune response by blocking the type I IFN production pathway through direct association with RARRES3 and MAVS. Also plays a role in translation or delivery of incoming viral RNA to the translation apparatus. As part of the ATG8 conjugation system with ATG5 and ATG16L1, required for recruitment of LRRK2 to stressed lysosomes and induction of LRRK2 kinase activity in response to lysosomal stress. This is Ubiquitin-like protein ATG12 from Pongo abelii (Sumatran orangutan).